Consider the following 144-residue polypeptide: Large ribosomal subunit protein uL15 (144 aa).

Positions 1–57 (MKLNDLSPAPGSRREKHRPGRGIGSGLGKTGGRGHKGQTSRSGGSIAPGFEGGQQPL) are disordered. Gly residues predominate over residues 21 to 31 (RGIGSGLGKTG).

It belongs to the universal ribosomal protein uL15 family. As to quaternary structure, part of the 50S ribosomal subunit.

In terms of biological role, binds to the 23S rRNA. The sequence is that of Large ribosomal subunit protein uL15 from Pseudomonas entomophila (strain L48).